Consider the following 372-residue polypeptide: Chorismate synthase (372 aa).

Arginine 48 is a binding site for NADP(+). Residues 131–133 (RSS), 243–244 (NA), glycine 288, 303–307 (KPTSS), and arginine 329 each bind FMN.

Belongs to the chorismate synthase family. As to quaternary structure, homotetramer. The cofactor is FMNH2.

The enzyme catalyses 5-O-(1-carboxyvinyl)-3-phosphoshikimate = chorismate + phosphate. It functions in the pathway metabolic intermediate biosynthesis; chorismate biosynthesis; chorismate from D-erythrose 4-phosphate and phosphoenolpyruvate: step 7/7. Functionally, catalyzes the anti-1,4-elimination of the C-3 phosphate and the C-6 proR hydrogen from 5-enolpyruvylshikimate-3-phosphate (EPSP) to yield chorismate, which is the branch point compound that serves as the starting substrate for the three terminal pathways of aromatic amino acid biosynthesis. This reaction introduces a second double bond into the aromatic ring system. The polypeptide is Chorismate synthase (Caulobacter vibrioides (strain ATCC 19089 / CIP 103742 / CB 15) (Caulobacter crescentus)).